The primary structure comprises 645 residues: DNA ligase (645 aa).

NAD(+) is bound by residues 30–34 (DIEYD), 79–80 (SM), and Glu106. The active-site N6-AMP-lysine intermediate is Lys108. Residues Arg129, Glu163, and Lys302 each coordinate NAD(+). 4 residues coordinate Zn(2+): Cys396, Cys399, Cys412, and Cys417. In terms of domain architecture, BRCT spans 570–645 (ISQNVFTKKT…ISEDEFKEML (76 aa)).

This sequence belongs to the NAD-dependent DNA ligase family. LigA subfamily. Mg(2+) serves as cofactor. Mn(2+) is required as a cofactor.

The enzyme catalyses NAD(+) + (deoxyribonucleotide)n-3'-hydroxyl + 5'-phospho-(deoxyribonucleotide)m = (deoxyribonucleotide)n+m + AMP + beta-nicotinamide D-nucleotide.. Functionally, DNA ligase that catalyzes the formation of phosphodiester linkages between 5'-phosphoryl and 3'-hydroxyl groups in double-stranded DNA using NAD as a coenzyme and as the energy source for the reaction. It is essential for DNA replication and repair of damaged DNA. This Campylobacter hominis (strain ATCC BAA-381 / DSM 21671 / CCUG 45161 / LMG 19568 / NCTC 13146 / CH001A) protein is DNA ligase.